The chain runs to 79 residues: MTHPVDAILDATGLNCPEPVMMLHNKVRDLAPGGLLKVIATDPSTRRDIPKFCVFLGHELVEQQEEAGTYLYWIRKKAD.

The active-site Cysteine persulfide intermediate is Cys-16.

The protein belongs to the sulfur carrier protein TusA family.

It localises to the cytoplasm. Sulfur carrier protein which probably makes part of a sulfur-relay system. This Pseudomonas paraeruginosa (strain DSM 24068 / PA7) (Pseudomonas aeruginosa (strain PA7)) protein is Sulfur carrier protein TusA.